The primary structure comprises 72 residues: Small, acid-soluble spore protein C (72 aa).

It belongs to the alpha/beta-type SASP family.

SASP are bound to spore DNA. They are double-stranded DNA-binding proteins that cause DNA to change to an a-like conformation. They protect the DNA backbone from chemical and enzymatic cleavage and are thus involved in dormant spore's high resistance to UV light. The polypeptide is Small, acid-soluble spore protein C (sasP-C) (Priestia megaterium (Bacillus megaterium)).